We begin with the raw amino-acid sequence, 176 residues long: Adenine phosphoribosyltransferase (176 aa).

Belongs to the purine/pyrimidine phosphoribosyltransferase family. In terms of assembly, homodimer.

The protein localises to the cytoplasm. The catalysed reaction is AMP + diphosphate = 5-phospho-alpha-D-ribose 1-diphosphate + adenine. It participates in purine metabolism; AMP biosynthesis via salvage pathway; AMP from adenine: step 1/1. Its function is as follows. Catalyzes a salvage reaction resulting in the formation of AMP, that is energically less costly than de novo synthesis. The chain is Adenine phosphoribosyltransferase from Leuconostoc mesenteroides subsp. mesenteroides (strain ATCC 8293 / DSM 20343 / BCRC 11652 / CCM 1803 / JCM 6124 / NCDO 523 / NBRC 100496 / NCIMB 8023 / NCTC 12954 / NRRL B-1118 / 37Y).